The chain runs to 607 residues: Aspartate--tRNA(Asp/Asn) ligase (607 aa).

Residue glutamate 173 participates in L-aspartate binding. The interval 197 to 200 (QLFK) is aspartate. Arginine 219 contacts L-aspartate. ATP-binding positions include 219–221 (RDE) and glutamine 228. Histidine 456 lines the L-aspartate pocket. Glutamate 498 contributes to the ATP binding site. Arginine 505 lines the L-aspartate pocket. ATP is bound at residue 550-553 (GLDR).

Belongs to the class-II aminoacyl-tRNA synthetase family. Type 1 subfamily. Homodimer.

Its subcellular location is the cytoplasm. The enzyme catalyses tRNA(Asx) + L-aspartate + ATP = L-aspartyl-tRNA(Asx) + AMP + diphosphate. Aspartyl-tRNA synthetase with relaxed tRNA specificity since it is able to aspartylate not only its cognate tRNA(Asp) but also tRNA(Asn). Reaction proceeds in two steps: L-aspartate is first activated by ATP to form Asp-AMP and then transferred to the acceptor end of tRNA(Asp/Asn). This is Aspartate--tRNA(Asp/Asn) ligase from Magnetococcus marinus (strain ATCC BAA-1437 / JCM 17883 / MC-1).